The following is a 335-amino-acid chain: Eukaryotic translation initiation factor 3 subunit I (335 aa).

WD repeat units follow at residues 8 to 47 (GHERSLNQIKFNRDGDLLFSVAKDKIVCAWWSANGERLGT), 50 to 91 (GHQG…KVWD), 145 to 184 (CTESKATVAGWSYLAKYIIAGHEDGSVSQYDSKTGEQLEN), 189 to 228 (EFDNLISDIQFSADRTYFITASKDKSAKLISSRNLAILKT), and 286 to 325 (GHFGPLNTVAVHPNGTAYASGGEDGYVRVHHFDKPYFDFM).

This sequence belongs to the eIF-3 subunit I family. Component of the eukaryotic translation initiation factor 3 (eIF-3) complex.

Its subcellular location is the cytoplasm. Component of the eukaryotic translation initiation factor 3 (eIF-3) complex, which is involved in protein synthesis of a specialized repertoire of mRNAs and, together with other initiation factors, stimulates binding of mRNA and methionyl-tRNAi to the 40S ribosome. The eIF-3 complex specifically targets and initiates translation of a subset of mRNAs involved in cell proliferation. In Aspergillus oryzae (strain ATCC 42149 / RIB 40) (Yellow koji mold), this protein is Eukaryotic translation initiation factor 3 subunit I (tif34).